Here is a 289-residue protein sequence, read N- to C-terminus: uncharacterized protein (289 aa).

Positions 80–96 are enriched in polar residues; the sequence is PLNESRTSFKNIPQSRN. 2 disordered regions span residues 80–101 and 136–157; these read PLNESRTSFKNIPQSRNLPRDY and PRENFRNDTDIPKDPLRDRMRE.

This is an uncharacterized protein from Acanthamoeba polyphaga (Amoeba).